A 363-amino-acid polypeptide reads, in one-letter code: Homeobox protein Hox-A2a (363 aa).

4 disordered regions span residues 30 to 88, 98 to 117, 189 to 220, and 268 to 308; these read DSFQ…LPPE, SKRN…GPVC, RMKH…SDEE, and DKNL…LDVS. Positions 31-44 are enriched in polar residues; sequence SFQSSSIKSSTLSR. The Antp-type hexapeptide motif lies at 88-93; the sequence is EYPWMR. Residues 103-113 show a composition bias toward polar residues; the sequence is LPNSTTTTISN. Residues 137–196 constitute a DNA-binding region (homeobox); sequence SRRLRTAYTNTQLLELEKEFHFNKYLCRPRRVEIAALLDLTERQVKVWFQNRRMKHKRQT.

The protein belongs to the Antp homeobox family. Proboscipedia subfamily.

It localises to the nucleus. In terms of biological role, sequence-specific transcription factor which is part of a developmental regulatory system that provides cells with specific positional identities on the anterior-posterior axis. In Takifugu rubripes (Japanese pufferfish), this protein is Homeobox protein Hox-A2a (hoxa2a).